The sequence spans 765 residues: 5-methyltetrahydropteroyltriglutamate--homocysteine methyltransferase 2 (765 aa).

The 5-methyltetrahydropteroyltri-L-glutamate site is built by K18 and N116. L-homocysteine contacts are provided by residues 437 to 439 (IGS) and E490. L-methionine is bound by residues 437–439 (IGS) and E490. Residues D495, Y518, 521–522 (RC), and W567 each bind 5-methyltetrahydropteroyltri-L-glutamate. D605 serves as a coordination point for L-homocysteine. Residue D605 coordinates L-methionine. Residues H647, C649, H658, D662, and E671 each coordinate Zn(2+). H701 acts as the Proton donor in catalysis. Residue C733 coordinates Zn(2+).

This sequence belongs to the vitamin-B12 independent methionine synthase family. It depends on Zn(2+) as a cofactor. Expressed in leaves, stems and siliques.

It localises to the cytoplasm. It is found in the cytosol. It carries out the reaction 5-methyltetrahydropteroyltri-L-glutamate + L-homocysteine = tetrahydropteroyltri-L-glutamate + L-methionine. It functions in the pathway amino-acid biosynthesis; L-methionine biosynthesis via de novo pathway; L-methionine from L-homocysteine (MetE route): step 1/1. Its function is as follows. Catalyzes the transfer of a methyl group from 5-methyltetrahydrofolate to homocysteine resulting in methionine formation. The polypeptide is 5-methyltetrahydropteroyltriglutamate--homocysteine methyltransferase 2 (MS2) (Arabidopsis thaliana (Mouse-ear cress)).